The chain runs to 927 residues: GPI inositol-deacylase (927 aa).

Over 1 to 4 (MNPL) the chain is Cytoplasmic. Residues 5–25 (SAVFNSVVLVLLALGVTDVFF) form a helical membrane-spanning segment. Residues 26-595 (SYESSRCSMT…QIVRFHGIYL (570 aa)) are Lumenal-facing. N-linked (GlcNAc...) asparagine glycosylation is found at Asn75 and Asn155. Residue Ser169 is part of the active site. N-linked (GlcNAc...) asparagine glycans are attached at residues Asn230, Asn362, Asn397, Asn432, Asn444, and Asn482. The chain crosses the membrane as a helical span at residues 596–616 (PVYIVANLLLAYGAQLHSILI). Topologically, residues 617–672 (QGSCMDLDLSFDVAAKPYKVDPVLIICKYLLNYKWFKNYWDGLMLPQLDAVQLHAY) are cytoplasmic. The chain crosses the membrane as a helical span at residues 673-693 (GFWFPLASLFFFIFGTSIAYW). Residues 694 to 733 (SSIGLQAAVRILSSLWIYLKRPSMFPKESKCITYRVYAET) lie on the Lumenal side of the membrane. Residues 734-754 (LFFAFISWRSCGTFSLLLVFL) form a helical membrane-spanning segment. At 755 to 821 (RYLSKVLILY…KALDDCLKMH (67 aa)) the chain is on the cytoplasmic side. Residues 822–842 (FTILHLNLWIVLLGLPSFIYW) form a helical membrane-spanning segment. The Lumenal portion of the chain corresponds to 843-858 (LKTLRYTIQLDPDPNR). The chain crosses the membrane as a helical span at residues 859 to 879 (VSALVLIFILEILMNSTTSAI). The Cytoplasmic segment spans residues 880–887 (KSSVCLKT). Residues 888–908 (AAVLQLPLSIIVVAFGTLHLY) form a helical membrane-spanning segment. At 909 to 927 (RISNLIAFSLFLHVVCCFV) the chain is on the lumenal side.

This sequence belongs to the GPI inositol-deacylase family.

The protein localises to the endoplasmic reticulum membrane. In terms of biological role, GPI inositol-deacylase that catalyzes the remove of the acyl chain linked to the 2-OH position of inositol ring from the GPI-anchored protein (GPI-AP) in the endoplasmic reticulum. Initiates the post-attachment remodeling phase of GPI-AP biogenesis and participates in endoplasmic reticulum (ER)-to-Golgi transport of GPI-anchored protein. In Xenopus laevis (African clawed frog), this protein is GPI inositol-deacylase.